The primary structure comprises 365 residues: Probable secreted beta-glucosidase UTH1 (365 aa).

The signal sequence occupies residues 1-17 (MKLSALLALSASTAVLA).

Belongs to the SUN family.

The protein resides in the mitochondrion outer membrane. It is found in the secreted. Its subcellular location is the cell wall. Functionally, involved in aging, oxidative stress response, and in the regulation of mitochondrial biogenesis. Inactivation of UTH1 increases life span, leads to higher resistance to heat stress and against hydrogen peroxide, and increases sensitivity to the superoxide radical-generating drug paraquat and to copper. Also required for the selective autophagic degradation of mitochondria (mitophagy) in response to nitrogen starvation. Involved in the remodeling of the cell wall during the various phases of yeast culture development and under various environmental conditions and plays a role in septation. Involved in cell sensitivity to boric acid. In Saccharomyces cerevisiae (strain ATCC 204508 / S288c) (Baker's yeast), this protein is Probable secreted beta-glucosidase UTH1 (UTH1).